Here is a 445-residue protein sequence, read N- to C-terminus: Tubulin beta-9 chain (445 aa).

GTP contacts are provided by glutamine 11, glutamate 69, serine 138, glycine 142, threonine 143, glycine 144, asparagine 204, and asparagine 226. A Mg(2+)-binding site is contributed by glutamate 69. Residues 423 to 445 are disordered; that stretch reads QQYQDATADDEEYEEEEEYEAEA. Residues 429 to 445 are compositionally biased toward acidic residues; that stretch reads TADDEEYEEEEEYEAEA.

Belongs to the tubulin family. Dimer of alpha and beta chains. A typical microtubule is a hollow water-filled tube with an outer diameter of 25 nm and an inner diameter of 15 nM. Alpha-beta heterodimers associate head-to-tail to form protofilaments running lengthwise along the microtubule wall with the beta-tubulin subunit facing the microtubule plus end conferring a structural polarity. Microtubules usually have 13 protofilaments but different protofilament numbers can be found in some organisms and specialized cells. Requires Mg(2+) as cofactor.

It localises to the cytoplasm. The protein resides in the cytoskeleton. Tubulin is the major constituent of microtubules, a cylinder consisting of laterally associated linear protofilaments composed of alpha- and beta-tubulin heterodimers. Microtubules grow by the addition of GTP-tubulin dimers to the microtubule end, where a stabilizing cap forms. Below the cap, tubulin dimers are in GDP-bound state, owing to GTPase activity of alpha-tubulin. The sequence is that of Tubulin beta-9 chain from Gossypium hirsutum (Upland cotton).